Consider the following 542-residue polypeptide: Chaperonin GroEL 2 (542 aa).

Residues 30–33 (TLGP), Lys51, 87–91 (DGTTT), Gly415, and Asp494 contribute to the ATP site.

The protein belongs to the chaperonin (HSP60) family. In terms of assembly, forms a cylinder of 14 subunits composed of two heptameric rings stacked back-to-back. Interacts with the co-chaperonin GroES.

Its subcellular location is the cytoplasm. The enzyme catalyses ATP + H2O + a folded polypeptide = ADP + phosphate + an unfolded polypeptide.. Together with its co-chaperonin GroES, plays an essential role in assisting protein folding. The GroEL-GroES system forms a nano-cage that allows encapsulation of the non-native substrate proteins and provides a physical environment optimized to promote and accelerate protein folding. This Syntrophobacter fumaroxidans (strain DSM 10017 / MPOB) protein is Chaperonin GroEL 2.